We begin with the raw amino-acid sequence, 262 residues long: MAILIELQDICVDFEQRRVLDNIRLTLTKGNITTLIGPNGAGKSTLVKVILGLQSLSSGKIIRQSGIRIGYVPQKLKLNDTLPLTVNRFLKLAGRFSTQELSEALRLVGGEHLQSSDMHKLSGGETQRVLLARALLQRPDLLVLDEPAQGVDVQGQIDLYDLIHTLRNRFGCAVLMVSHDLHLVMAKTDEVICLQHHVCCSGSPESIAKHPSYLAMFGHRSRDTLAFYQHHHEHHHHDLSGLPVKGKASVCSHHSHGHHKHD.

Residues 5-220 (IELQDICVDF…PSYLAMFGHR (216 aa)) form the ABC transporter domain. Residue 37–44 (GPNGAGKS) coordinates ATP.

It belongs to the ABC transporter superfamily. Zinc importer (TC 3.A.1.15.5) family. As to quaternary structure, the complex is composed of two ATP-binding proteins (ZnuC), two transmembrane proteins (ZnuB) and a solute-binding protein (ZnuA).

It localises to the cell inner membrane. The enzyme catalyses Zn(2+)(out) + ATP(in) + H2O(in) = Zn(2+)(in) + ADP(in) + phosphate(in) + H(+)(in). Functionally, part of the ABC transporter complex ZnuABC involved in zinc import. Responsible for energy coupling to the transport system. The chain is Zinc import ATP-binding protein ZnuC from Vibrio cholerae serotype O1 (strain ATCC 39315 / El Tor Inaba N16961).